A 207-amino-acid polypeptide reads, in one-letter code: Protein N-terminal glutamine amidohydrolase (207 aa).

Catalysis depends on residues Cys30, His83, and Asp99.

The protein belongs to the NTAQ1 family. As to quaternary structure, monomer.

The protein resides in the cytoplasm. It localises to the cytosol. It is found in the nucleus. It carries out the reaction N-terminal L-glutaminyl-[protein] + H2O = N-terminal L-glutamyl-[protein] + NH4(+). Its function is as follows. Mediates the side-chain deamidation of N-terminal glutamine residues to glutamate, an important step in N-end rule pathway of protein degradation. Conversion of the resulting N-terminal glutamine to glutamate renders the protein susceptible to arginylation, polyubiquitination and degradation as specified by the N-end rule. Does not act on substrates with internal or C-terminal glutamine and does not act on non-glutamine residues in any position. Does not deaminate acetylated N-terminal glutamine. With the exception of proline, all tested second-position residues on substrate peptides do not greatly influence the activity. In contrast, a proline at position 2, virtually abolishes deamidation of N-terminal glutamine. The polypeptide is Protein N-terminal glutamine amidohydrolase (NTAQ1) (Bos taurus (Bovine)).